The chain runs to 90 residues: Antitoxin epsilon (90 aa).

It belongs to the epsilon antitoxin family. In terms of assembly, in the presence of the zeta toxin, forms an inactive PezA(2)PezT(2) heterotetramer.

Functionally, antitoxin component of a type II toxin-antitoxin (TA) system. Neutralizes the toxic effect of cognate zeta toxin. Part of a postsegregational killing (PSK) system involved in the killing of plasmid-free cells. Continuous synthesis of the epsilon antitoxin is required to counteract the zeta toxin. This chain is Antitoxin epsilon, found in Streptococcus agalactiae.